Reading from the N-terminus, the 397-residue chain is Lysophospholipid transporter LplT (397 aa).

The next 11 membrane-spanning stretches (helical) occupy residues 21-41 (SAQF…LALL), 53-73 (ILQM…GQVA), 91-111 (LGAA…LVGI), 139-159 (LMES…GVLA), 164-184 (LAAL…NLFI), 229-249 (WGAG…ALGI), 257-277 (YLNA…AKLV), 281-301 (TVRR…FFSL), 304-324 (ALLP…FFIV), 344-364 (IAVQ…LYSL), and 372-392 (VVGI…GLWI).

This sequence belongs to the major facilitator superfamily. LplT (TC 2.A.1.42) family.

Its subcellular location is the cell inner membrane. In terms of biological role, catalyzes the facilitated diffusion of 2-acyl-glycero-3-phosphoethanolamine (2-acyl-GPE) into the cell. This chain is Lysophospholipid transporter LplT, found in Enterobacter sp. (strain 638).